A 233-amino-acid polypeptide reads, in one-letter code: MYRVPIHEWDESDQPREKLLTHGPTVLSDAEVLALLLGSGTRTSDGPVSAVELGRALLQSYGSLHEVSQRKPKELTRTRGVGPAKATKLAAAFEAGRRVESQRQQDERMQVTCPADVADVYGPLLRDLDKEVFKVVHLNTANVIIGDYTVSEGGLSSSVVEPRGVFEQAILDDAAAVICLHNHPSGNPEPSREDIRITRQLAEAGGTMGIPVHDHLIIAGTKHTSLAERGVID.

Residues Gln-110–Ile-232 form the MPN domain. The Zn(2+) site is built by His-181, His-183, and Asp-194. The JAMM motif signature appears at His-181–Asp-194.

The protein belongs to the UPF0758 family.

This chain is UPF0758 protein SRU_2338, found in Salinibacter ruber (strain DSM 13855 / M31).